Consider the following 221-residue polypeptide: Large ribosomal subunit protein uL3 (221 aa).

This sequence belongs to the universal ribosomal protein uL3 family. Part of the 50S ribosomal subunit. Forms a cluster with proteins L14 and L19.

Functionally, one of the primary rRNA binding proteins, it binds directly near the 3'-end of the 23S rRNA, where it nucleates assembly of the 50S subunit. The polypeptide is Large ribosomal subunit protein uL3 (Chlamydia abortus (strain DSM 27085 / S26/3) (Chlamydophila abortus)).